Consider the following 320-residue polypeptide: Ferrochelatase (320 aa).

H194 and E275 together coordinate Fe cation.

The protein belongs to the ferrochelatase family. Monomer.

The protein localises to the cytoplasm. It carries out the reaction heme b + 2 H(+) = protoporphyrin IX + Fe(2+). Its pathway is porphyrin-containing compound metabolism; protoheme biosynthesis; protoheme from protoporphyrin-IX: step 1/1. Its function is as follows. Catalyzes the ferrous insertion into protoporphyrin IX. The protein is Ferrochelatase of Escherichia coli O157:H7 (strain EC4115 / EHEC).